The chain runs to 267 residues: Dihydropteroate synthase (267 aa).

The region spanning 1 to 251 is the Pterin-binding domain; the sequence is MTKTKIMGIL…NVELNAKLAK (251 aa). Asn-11 lines the Mg(2+) pocket. Residues Thr-51, Asp-84, Asn-103, Asp-167, Lys-203, and 239–241 each bind (7,8-dihydropterin-6-yl)methyl diphosphate; that span reads RVH.

The protein belongs to the DHPS family. In terms of assembly, homodimer. The cofactor is Mg(2+).

The enzyme catalyses (7,8-dihydropterin-6-yl)methyl diphosphate + 4-aminobenzoate = 7,8-dihydropteroate + diphosphate. Its pathway is cofactor biosynthesis; tetrahydrofolate biosynthesis; 7,8-dihydrofolate from 2-amino-4-hydroxy-6-hydroxymethyl-7,8-dihydropteridine diphosphate and 4-aminobenzoate: step 1/2. Its function is as follows. Catalyzes the condensation of para-aminobenzoate (pABA) with 6-hydroxymethyl-7,8-dihydropterin diphosphate (DHPt-PP) to form 7,8-dihydropteroate (H2Pte), the immediate precursor of folate derivatives. The polypeptide is Dihydropteroate synthase (folP) (Staphylococcus aureus (strain MW2)).